The sequence spans 648 residues: Exoribonuclease 2 (648 aa).

An RNB domain is found at 191-518 (RIDLTYLDFI…INHRLIKSII (328 aa)). The 83-residue stretch at 565-647 (KKKYQANIID…GNKKIIATMI (83 aa)) folds into the S1 motif domain.

The protein belongs to the RNR ribonuclease family. RNase II subfamily.

Its subcellular location is the cytoplasm. It carries out the reaction Exonucleolytic cleavage in the 3'- to 5'-direction to yield nucleoside 5'-phosphates.. Its function is as follows. Involved in mRNA degradation. Hydrolyzes single-stranded polyribonucleotides processively in the 3' to 5' direction. The sequence is that of Exoribonuclease 2 from Buchnera aphidicola subsp. Cinara cedri (strain Cc).